The chain runs to 286 residues: NAD(P)H azoreductase (286 aa).

NADP(+)-binding positions include 6-11, R31, and 136-141; these read GGTGTI and GFFMQN.

Belongs to the NmrA-type oxidoreductase family. Azoreductase type 3 subfamily. As to quaternary structure, monomer.

Its function is as follows. Catalyzes the reductive cleavage of azo bond in aromatic azo compounds to the corresponding amines. Uses preferentially NADPH rather than NADH as an electron donor for its activity. The enzyme reductively cleaved Orange II and carboxy-Orange II, and can also reduce several sulfonated structural analogs, which carry a hydroxy group in the 2 position of the naphthol ring. The protein is NAD(P)H azoreductase (azoB) of Xenophilus azovorans.